The sequence spans 346 residues: Putative toluene-4-sulfonate monooxygenase system iron-sulfur subunit TsaM2 (346 aa).

The region spanning 7–108 (WYVAGMATDC…LVERHGLLWI (102 aa)) is the Rieske domain. Positions 47, 49, 66, and 69 each coordinate [2Fe-2S] cluster.

As to quaternary structure, homotetramer. Part of the p-toluenesulfonate methyl-monooxygenase complex TsaBM, comprising the reductase TsaB and the oxygenase TsaM. Requires [2Fe-2S] cluster as cofactor.

It catalyses the reaction toluene-4-sulfonate + NADH + O2 + H(+) = 4-(hydroxymethyl)benzenesulfonate + NAD(+) + H2O. In terms of biological role, involved in the toluene-4-sulfonate degradation pathway. Does not discriminate between the sulfonate and the carboxyl substituents and can also be involved in the p-toluenecarboxylate degradation pathway. This is Putative toluene-4-sulfonate monooxygenase system iron-sulfur subunit TsaM2 (tsaM2) from Comamonas testosteroni (Pseudomonas testosteroni).